The primary structure comprises 566 residues: MASSDSNAKLASQRLHSCAGGEESSGQCLEKQGAGARLRGWLAQLLPRADLPGARQKTPFNLNRYVLLLLYSIVVFTTGAVFYGWTALSAMIFKNDGFAYLCPKDASGVYVPDLRATQGKLYICDEQDAAVQKLYTMTFAVACLMSAGAGTLLDWLGPLWTELLGQLLNLVGWLFLAFSTVDRPLYYPALVFIGLGADASMLPTLCIRHLFPGSTGLIITILGSAASASFGIPLVLNTIVENHGVSVRDVSIGYCFFGPVLGVLVALLFMPRRGFALDDAGTIFREPDSGEGEGEAGPYALENGAQGGESQNAQETRRRKLLDPIVSSSFWTQFFSIRYFLIVLYFVVVSWATSYYQQAARRMFSEDVVSVIEVLLPLSFIPCILLGKVADVVGIIRVLFVMNTSGLLTYVFSFFKTDATGYLSACCFMVYMSLLTSQVYVYVEGTFSPNHFGKLIGISNLTGGLLSLVSNPLYENITVNRDNGDPLCIQIAMTALLCVQYVWIFILGFLKSGNSPLLNMDVKAKDDADAEKRADNAPGAEERTSAPSGSSSELAAVTVTPPQDSA.

Transmembrane regions (helical) follow at residues 65–85 (YVLLLLYSIVVFTTGAVFYGW), 137–157 (MTFAVACLMSAGAGTLLDWLG), 158–178 (PLWTELLGQLLNLVGWLFLAF), 187–207 (YPALVFIGLGADASMLPTLCI), 216–236 (GLIITILGSAASASFGIPLVL), 250–270 (VSIGYCFFGPVLGVLVALLFM), 334–354 (FFSIRYFLIVLYFVVVSWATS), 367–387 (DVVSVIEVLLPLSFIPCILLG), 392–412 (VVGIIRVLFVMNTSGLLTYVF), 423–443 (LSACCFMVYMSLLTSQVYVYV), and 455–475 (LIGISNLTGGLLSLVSNPLYE). The N-linked (GlcNAc...) asparagine glycan is linked to N476. The helical transmembrane segment at 489–509 (IQIAMTALLCVQYVWIFILGF) threads the bilayer.

It belongs to the SLC43A transporter (TC 2.A.1.44) family.

The protein localises to the cell membrane. It carries out the reaction L-lysine(in) = L-lysine(out). It catalyses the reaction L-arginine(in) = L-arginine(out). The catalysed reaction is L-methionine(in) = L-methionine(out). The enzyme catalyses L-leucine(in) = L-leucine(out). Cationic and neutral amino acid transporter. Transports lysine with high affinity. Can transport arginine, methionine and leucine. Does not require inorganic ions, such as sodium, chloride, potassium, calcium or magnesium, for transport activity. This chain is Amino acid transporter 6-1, found in Toxoplasma gondii (strain ATCC 50611 / Me49).